The sequence spans 601 residues: MEGSDFLLAGVLFLFAAVAAVPLASRLGIGAVLGYLLAGIAIGPWGLGFISDVDEILHFSELGVVFLMFIIGLELNPSKLWQLRRSIFGVGAAQVLLSAALLAGLLMLTDFAWQAAVVGGIGLAMSSTAMALQLMREKGMNRSESGQLGFSVLLFQDLAVIPALALVPLLAGSADEHFDWMKVGMKVLAFVGMLIGGRYLLRPVFRFIAASGVREVFTAATLLLVLGSALFMDALGLSMALGTFIAGVLLAESEYRHELETAIDPFKGLLLGLFFISVGMSLNLGVLYTHLLWVVISVVVLVAVKILVLYLLARLYGVRSSERMQFAGVLSQGGEFAFVLFSTASSQRLFQGDQMALLLVTVTLSMMTTPLLMKLVDKWLSRQFNGPEEEDEKPWVNDDKPQVIVVGFGRFGQVIGRLLMANKMRITVLERDISAVNLMRKYGYKVYYGDATQVDLLRSAGAEAAESIVITCNEPEDTMKLVEICQQHFPHLHILARARGRVEAHELLQAGVTQFSRETFSSALELGRKTLVTLGMHPHQAQRAQLHFRRLDMRMLRELIPMHADTVQISRAREARRELEEIFQREMQQERRQLDGWDEFE.

13 helical membrane-spanning segments follow: residues 4-24, 29-49, 55-75, 87-107, 115-135, 152-172, 177-197, 207-227, 230-250, 268-288, 291-311, 324-344, and 356-376; these read SDFLLAGVLFLFAAVAAVPLA, IGAVLGYLLAGIAIGPWGLGF, EILHFSELGVVFLMFIIGLEL, IFGVGAAQVLLSAALLAGLLM, AAVVGGIGLAMSSTAMALQLM, VLLFQDLAVIPALALVPLLAG, HFDWMKVGMKVLAFVGMLIGG, FIAASGVREVFTAATLLLVLG, LFMDALGLSMALGTFIAGVLL, GLLLGLFFISVGMSLNLGVLY, LLWVVISVVVLVAVKILVLYL, MQFAGVLSQGGEFAFVLFSTA, and ALLLVTVTLSMMTTPLLMKLV. The RCK N-terminal domain occupies 400 to 519; that stretch reads KPQVIVVGFG…AGVTQFSRET (120 aa).

It belongs to the monovalent cation:proton antiporter 2 (CPA2) transporter (TC 2.A.37) family. KefB subfamily. Interacts with the regulatory subunit KefG.

The protein resides in the cell inner membrane. Activated by adducts between glutathione and electrophiles. In terms of biological role, pore-forming subunit of a potassium efflux system that confers protection against electrophiles. Catalyzes K(+)/H(+) antiport. The protein is Glutathione-regulated potassium-efflux system protein KefB of Escherichia coli (strain K12).